The sequence spans 326 residues: Dehydrogenase/reductase SDR family protein 7-like (326 aa).

At 1–17 (MKVQDMDKCAPSSDWNV) the chain is on the cytoplasmic side. The chain crosses the membrane as a helical; Signal-anchor for type II membrane protein span at residues 18–38 (LYWVLGTVLMPVALPLAIINI). Topologically, residues 39–326 (WQRFQAQKFR…KLENAEKKST (288 aa)) are peroxisomal. 57–81 (LITGASSGLGESLAHVFYRAGCRVI) contacts NAD(+). Serine 193 contacts substrate. Catalysis depends on tyrosine 206, which acts as the Proton acceptor.

It belongs to the short-chain dehydrogenases/reductases (SDR) family.

The protein localises to the peroxisome membrane. Functionally, putative oxidoreductase. The sequence is that of Dehydrogenase/reductase SDR family protein 7-like from Drosophila melanogaster (Fruit fly).